Reading from the N-terminus, the 339-residue chain is Trace amine-associated receptor 2 (339 aa).

Residues 1–36 lie on the Extracellular side of the membrane; it reads MASFEAQQETFDCSEYGNGSCPENERSLGVRAAMYS. Asn-18 carries N-linked (GlcNAc...) asparagine glycosylation. Intrachain disulfides connect Cys-21-Cys-185 and Cys-104-Cys-189. Residues 37–57 form a helical membrane-spanning segment; it reads LMACAIFITIFGNLAMIISIS. At 58–67 the chain is on the cytoplasmic side; the sequence is YFKQLHTPTN. The chain crosses the membrane as a helical span at residues 68-88; the sequence is LLILSMAVTDFLLGFTIMPYS. Residues 89–106 are Extracellular-facing; the sequence is MVRSVENCWYFGLTFCKI. The helical transmembrane segment at 107–127 threads the bilayer; sequence HYSFDLMLSITSIFHLCSVAV. Residues 128–150 are Cytoplasmic-facing; sequence DRFYAICHPLHYCTKMTIPVVRR. The helical transmembrane segment at 151 to 171 threads the bilayer; sequence LLLVCWSVPGAFAFGVVFSEA. Residues 172-195 lie on the Extracellular side of the membrane; that stretch reads YADGIEGYDILVACSSSCPVMFNK. A helical membrane pass occupies residues 196 to 216; sequence LWGTTLFVAGFFTPSSMMVGI. The Cytoplasmic segment spans residues 217–251; the sequence is YGKIFAVSKKHARVIDNLPENQNNQMRKDKKAAKT. Residues 252–272 form a helical membrane-spanning segment; sequence LGIVMGVFLLCWFPCFFTILL. Residues 273–287 are Extracellular-facing; it reads DPFLNFSTPAVLFDA. An N-linked (GlcNAc...) asparagine glycan is attached at Asn-277. Residues 288–310 traverse the membrane as a helical segment; that stretch reads LTWFGYFNSTCNPLIYGFFYPWF. Residues 311-339 are Cytoplasmic-facing; that stretch reads RRALKYILLGKIFSSHFHNTNLFTQKETE.

It belongs to the G-protein coupled receptor 1 family. As to expression, mainly expressed in neurons of the olfactory epithelium. Also present in the limbic brain areas receiving projection from the olfactory system and several brain regions, including the hippocampus, cerebellum, cortex, raphe nuclei, hypothalamus and habenula.

It localises to the cell membrane. Functionally, orphan olfactory receptor specific for trace amines. Trace amine compounds are enriched in animal body fluids and act on trace amine-associated receptors (TAARs) to elicit both intraspecific and interspecific innate behaviors. Ligand-binding causes a conformation change that triggers signaling via the G(s)-class of G-proteins which activate adenylate cyclase. May also be required to provide olfactory input into limbic brain areas to regulate emotional behaviors likely via modulation of the dopamine system. The chain is Trace amine-associated receptor 2 from Mus musculus (Mouse).